Consider the following 490-residue polypeptide: Ribulose bisphosphate carboxylase large chain (490 aa).

Residues Asn127 and Thr177 each coordinate substrate. Lys179 functions as the Proton acceptor in the catalytic mechanism. Lys181 is a binding site for substrate. Residues Lys205, Asp207, and Glu208 each coordinate Mg(2+). The residue at position 205 (Lys205) is an N6-carboxylysine. Catalysis depends on His297, which acts as the Proton acceptor. Substrate-binding residues include Arg298, His330, and Ser382.

Belongs to the RuBisCO large chain family. Type I subfamily. As to quaternary structure, heterohexadecamer of 8 large chains and 8 small chains. It depends on Mg(2+) as a cofactor.

The protein localises to the plastid. Its subcellular location is the chloroplast. The catalysed reaction is 2 (2R)-3-phosphoglycerate + 2 H(+) = D-ribulose 1,5-bisphosphate + CO2 + H2O. It carries out the reaction D-ribulose 1,5-bisphosphate + O2 = 2-phosphoglycolate + (2R)-3-phosphoglycerate + 2 H(+). RuBisCO catalyzes two reactions: the carboxylation of D-ribulose 1,5-bisphosphate, the primary event in carbon dioxide fixation, as well as the oxidative fragmentation of the pentose substrate in the photorespiration process. Both reactions occur simultaneously and in competition at the same active site. This is Ribulose bisphosphate carboxylase large chain from Trieres chinensis (Marine centric diatom).